The primary structure comprises 274 residues: Methylamine utilization protein MauF (274 aa).

7 helical membrane-spanning segments follow: residues 30-50, 52-72, 105-125, 127-147, 176-196, 202-222, and 253-273; these read WTRA…ALAM, AAHV…LSTW, LGYA…GGIA, LSGF…LAYG, WVVG…YVQT, VTAA…IAIF, and AAIA…MLAL.

Its subcellular location is the cell membrane. Its pathway is one-carbon metabolism; methylamine degradation. The sequence is that of Methylamine utilization protein MauF (mauF) from Paracoccus versutus (Thiobacillus versutus).